A 305-amino-acid chain; its full sequence is UDP-N-acetylenolpyruvoylglucosamine reductase 2 (305 aa).

The region spanning 33–197 (VGGKADVFVA…LEARFELEEG (165 aa)) is the FAD-binding PCMH-type domain. The active site involves R176. The active-site Proton donor is the S226. The active site involves E296.

It belongs to the MurB family. It depends on FAD as a cofactor.

The protein resides in the cytoplasm. The enzyme catalyses UDP-N-acetyl-alpha-D-muramate + NADP(+) = UDP-N-acetyl-3-O-(1-carboxyvinyl)-alpha-D-glucosamine + NADPH + H(+). It functions in the pathway cell wall biogenesis; peptidoglycan biosynthesis. Cell wall formation. The sequence is that of UDP-N-acetylenolpyruvoylglucosamine reductase 2 from Bacillus cereus (strain ATCC 10987 / NRS 248).